Reading from the N-terminus, the 221-residue chain is Probable GTP-binding protein EngB (221 aa).

The EngB-type G domain occupies G32–T205. GTP-binding positions include G40–S47, G67–L71, D85–G88, T152–D155, and V184–N186. Mg(2+) contacts are provided by S47 and T69.

Belongs to the TRAFAC class TrmE-Era-EngA-EngB-Septin-like GTPase superfamily. EngB GTPase family. It depends on Mg(2+) as a cofactor.

Necessary for normal cell division and for the maintenance of normal septation. The chain is Probable GTP-binding protein EngB from Leptospira borgpetersenii serovar Hardjo-bovis (strain JB197).